We begin with the raw amino-acid sequence, 125 residues long: uncharacterized protein (125 aa).

Residues 7-29 (NCMFLYVYTDVCVRLCASIFYIM) traverse the membrane as a helical segment.

It localises to the membrane. This is an uncharacterized protein from Saccharomyces cerevisiae (strain ATCC 204508 / S288c) (Baker's yeast).